The primary structure comprises 364 residues: DNA replication and repair protein RecF (364 aa).

Residue 30–37 (GDNAQGKT) participates in ATP binding.

Belongs to the RecF family.

It is found in the cytoplasm. In terms of biological role, the RecF protein is involved in DNA metabolism; it is required for DNA replication and normal SOS inducibility. RecF binds preferentially to single-stranded, linear DNA. It also seems to bind ATP. In Clostridium kluyveri (strain ATCC 8527 / DSM 555 / NBRC 12016 / NCIMB 10680 / K1), this protein is DNA replication and repair protein RecF.